The following is an 88-amino-acid chain: Synaptonemal complex central element protein 3 (88 aa).

Residues 8–75 (ERSYDNMLKM…FLNCKEEMEK (68 aa)) are a coiled coil.

As to quaternary structure, homodimer. Can form higher-order homooligomers. Interacts with SYCP1 (via tetrameric core); the interaction remodels SYCP1 homotetramers to 2:1 heterotrimers with SYCE3. SYCP1/SYCE3 heterotrimers form lattice assemblies as part of the mature synaptonemal complex via both lateral and head-to-head interactions. Interacts with the SYCE1-SIX6OS1 complex; the interaction recruits the SYCE1-SIX6OS1 complex to the central element of the synaptonemal complex. Interacts with the SYCE2-TEX12 complex; the interaction promotes fibrous assembly of SYCE2-TEX12 as part of the synaptonemal complex central element. Interacts with SYCE1. Interacts with SYCE2. Interacts with proteasome subunit PSMA8; to participate in meiosis progression during spermatogenesis. Interacts with SPO16. In terms of tissue distribution, expression is restricted to spermatocytes and is absent in spermatogonia, spermatids and spermatogonia (at protein level). Expressed in adult testis and embryonic ovary. Expressed in the convoluted seminiferous tubules in spermatogonia and spermatocytes.

It localises to the nucleus. It is found in the chromosome. Its function is as follows. Major component of the transverse central element of synaptonemal complexes (SCS), formed between homologous chromosomes during meiotic prophase. Required for the assembly of the central element of the synaptonemal complex during meiosis, via remodeling of SYCP1 lattice structures and promoting recruitment of SYCE2-TEX12 and SYCE1-SIX60S1 complexes. Required for chromosome loading of the central element-specific SCS proteins, and for initiating synapsis between homologous chromosomes. Chromosome loading appears to require SYCP1. Required for fertility and normal testis development. May play a role in apoptosis of spermatogenic cells and pathogenesis of cryptorchidism. This Mus musculus (Mouse) protein is Synaptonemal complex central element protein 3.